We begin with the raw amino-acid sequence, 225 residues long: Rho GDP-dissociation inhibitor 3 (225 aa).

Belongs to the Rho GDI family.

It localises to the cytoplasm. Inhibits GDP/GTP exchange reaction of RhoB. Interacts specifically with the GDP- and GTP-bound forms of post-translationally processed Rhob and Rhog proteins, both of which show a growth-regulated expression in mammalian cells. Stimulates the release of the GDP-bound but not the GTP-bound RhoB protein. Also inhibits the GDP/GTP exchange of RhoB but shows less ability to inhibit the dissociation of prebound GTP. This is Rho GDP-dissociation inhibitor 3 (ARHGDIG) from Bos taurus (Bovine).